A 570-amino-acid polypeptide reads, in one-letter code: Sulfite reductase [NADPH] hemoprotein beta-component (570 aa).

[4Fe-4S] cluster is bound by residues Cys434, Cys440, Cys479, and Cys483. Cys483 serves as a coordination point for siroheme.

Belongs to the nitrite and sulfite reductase 4Fe-4S domain family. As to quaternary structure, alpha(8)-beta(8). The alpha component is a flavoprotein, the beta component is a hemoprotein. It depends on siroheme as a cofactor. Requires [4Fe-4S] cluster as cofactor.

The enzyme catalyses hydrogen sulfide + 3 NADP(+) + 3 H2O = sulfite + 3 NADPH + 4 H(+). It participates in sulfur metabolism; hydrogen sulfide biosynthesis; hydrogen sulfide from sulfite (NADPH route): step 1/1. Its function is as follows. Component of the sulfite reductase complex that catalyzes the 6-electron reduction of sulfite to sulfide. This is one of several activities required for the biosynthesis of L-cysteine from sulfate. The protein is Sulfite reductase [NADPH] hemoprotein beta-component of Escherichia coli (strain ATCC 8739 / DSM 1576 / NBRC 3972 / NCIMB 8545 / WDCM 00012 / Crooks).